Consider the following 88-residue polypeptide: Metastasis-suppressor KiSS-1 (88 aa).

Residues S1–E13 are compositionally biased toward polar residues. The tract at residues S1–W88 is disordered. A compositionally biased stretch (low complexity) spans S33–P55. Basic and acidic residues predominate over residues Q78–W88. Residue Y86 is modified to Phosphotyrosine.

Belongs to the KISS1 family. In terms of tissue distribution, in the hypothalamus, expression increases with puberty in both male and female monkeys. Robust expression in the region of the arcuate nucleus (ARC).

The protein localises to the secreted. In terms of biological role, metastasis suppressor protein. May regulate events downstream of cell-matrix adhesion, perhaps involving cytoskeletal reorganization. Generates a C-terminally amidated peptide, metastin which functions as the endogenous ligand of the G-protein coupled receptor GPR54. The receptor is essential for normal gonadotropin-released hormone physiology and for puberty. The hypothalamic KiSS1/GPR54 system is a pivotal factor in central regulation of the gonadotropic axis at puberty and in adulthood. The chain is Metastasis-suppressor KiSS-1 (KISS1) from Macaca mulatta (Rhesus macaque).